The sequence spans 263 residues: Type II restriction enzyme TthHB8I (263 aa).

The catalysed reaction is Endonucleolytic cleavage of DNA to give specific double-stranded fragments with terminal 5'-phosphates.. In terms of biological role, a P subtype restriction enzyme that recognizes the double-stranded sequence 5'-TCGA-3' and cleaves after T-1. The protein is Type II restriction enzyme TthHB8I (tthHB8IR) of Thermus thermophilus (strain ATCC 27634 / DSM 579 / HB8).